Reading from the N-terminus, the 296-residue chain is Fructose-bisphosphate aldolase class 1 (296 aa).

Glu175 acts as the Proton acceptor in catalysis. The active-site Schiff-base intermediate with dihydroxyacetone-P is Lys212.

It belongs to the class I fructose-bisphosphate aldolase family.

The enzyme catalyses beta-D-fructose 1,6-bisphosphate = D-glyceraldehyde 3-phosphate + dihydroxyacetone phosphate. It participates in carbohydrate degradation; glycolysis; D-glyceraldehyde 3-phosphate and glycerone phosphate from D-glucose: step 4/4. The protein is Fructose-bisphosphate aldolase class 1 of Staphylococcus aureus (strain MRSA252).